Here is a 441-residue protein sequence, read N- to C-terminus: Glutamate--tRNA ligase 2 (441 aa).

A 'HIGH' region motif is present at residues 9-19 (PSPTGYIHVGN). The 'KMSKS' region motif lies at 239–243 (ALSKR). Residue K242 coordinates ATP.

It belongs to the class-I aminoacyl-tRNA synthetase family. Glutamate--tRNA ligase type 1 subfamily. Monomer.

The protein localises to the cytoplasm. The catalysed reaction is tRNA(Glu) + L-glutamate + ATP = L-glutamyl-tRNA(Glu) + AMP + diphosphate. Functionally, catalyzes the attachment of glutamate to tRNA(Glu) in a two-step reaction: glutamate is first activated by ATP to form Glu-AMP and then transferred to the acceptor end of tRNA(Glu). In Cereibacter sphaeroides (strain ATCC 17029 / ATH 2.4.9) (Rhodobacter sphaeroides), this protein is Glutamate--tRNA ligase 2.